We begin with the raw amino-acid sequence, 439 residues long: Ornithine aminotransferase, mitochondrial (439 aa).

Residues 1–25 (MLSKLASLQTIAALRRGVHTSVASA) constitute a mitochondrion transit peptide. 2 positions are modified to N6-acetyllysine: lysine 49 and lysine 66. Lysine 102 carries the N6-succinyllysine modification. The residue at position 107 (lysine 107) is an N6-acetyllysine; alternate. An N6-succinyllysine; alternate modification is found at lysine 107. Lysine 292 carries the N6-(pyridoxal phosphate)lysine modification. Lysine 362 carries the N6-acetyllysine; alternate modification. Position 362 is an N6-succinyllysine; alternate (lysine 362). 2 positions are modified to N6-acetyllysine: lysine 386 and lysine 392. At lysine 405 the chain carries N6-acetyllysine; alternate. Position 405 is an N6-succinyllysine; alternate (lysine 405). At lysine 421 the chain carries N6-acetyllysine.

The protein belongs to the class-III pyridoxal-phosphate-dependent aminotransferase family. Homohexamer. The cofactor is pyridoxal 5'-phosphate.

The protein resides in the mitochondrion matrix. It catalyses the reaction L-ornithine + 2-oxoglutarate = L-glutamate 5-semialdehyde + L-glutamate. Its pathway is amino-acid biosynthesis; L-proline biosynthesis; L-glutamate 5-semialdehyde from L-ornithine: step 1/1. In terms of biological role, catalyzes the reversible interconversion of L-ornithine and 2-oxoglutarate to L-glutamate semialdehyde and L-glutamate. This Mus musculus (Mouse) protein is Ornithine aminotransferase, mitochondrial (Oat).